Reading from the N-terminus, the 506-residue chain is 2-isopropylmalate synthase (506 aa).

In terms of domain architecture, Pyruvate carboxyltransferase spans 4-266; it reads ILFMDTTLRD…EPSMTLKEIK (263 aa). Mn(2+) contacts are provided by D13, H201, H203, and N237. Positions 390–506 are regulatory domain; it reads NITQLQVHFV…KLKSFIQLVK (117 aa).

The protein belongs to the alpha-IPM synthase/homocitrate synthase family. LeuA type 1 subfamily. In terms of assembly, homodimer. Requires Mn(2+) as cofactor.

Its subcellular location is the cytoplasm. It carries out the reaction 3-methyl-2-oxobutanoate + acetyl-CoA + H2O = (2S)-2-isopropylmalate + CoA + H(+). It participates in amino-acid biosynthesis; L-leucine biosynthesis; L-leucine from 3-methyl-2-oxobutanoate: step 1/4. Catalyzes the condensation of the acetyl group of acetyl-CoA with 3-methyl-2-oxobutanoate (2-ketoisovalerate) to form 3-carboxy-3-hydroxy-4-methylpentanoate (2-isopropylmalate). The sequence is that of 2-isopropylmalate synthase from Bacillus cereus (strain AH820).